Consider the following 291-residue polypeptide: Asialoglycoprotein receptor 1 (291 aa).

Over residues 1–19 (MTKECQDLQHLDNEESDHH) the composition is skewed to basic and acidic residues. Positions 1 to 27 (MTKECQDLQHLDNEESDHHQLRKGPPP) are disordered. At 1-40 (MTKECQDLQHLDNEESDHHQLRKGPPPSQPLLQRLCSGPR) the chain is on the cytoplasmic side. Residues 5-8 (CQDL) carry the Endocytosis signal motif. Ser-16 bears the Phosphoserine mark. The S-palmitoyl cysteine moiety is linked to residue Cys-36. The chain crosses the membrane as a helical; Signal-anchor for type II membrane protein span at residues 41–61 (LLLLSLGLSLLLLVVVCVIGS). A coiled-coil region spans residues 61-123 (SQNSQLQKEL…KDLSEDHSSL (63 aa)). At 62–291 (QNSQLQKELR…DKASQEPPLL (230 aa)) the chain is on the extracellular side. 2 N-linked (GlcNAc...) asparagine glycosylation sites follow: Asn-79 and Asn-147. Disulfide bonds link Cys-154-Cys-165, Cys-182-Cys-277, and Cys-255-Cys-269. In terms of domain architecture, C-type lectin spans 161–278 (HERSCYWFSR…CQRPYRWVCE (118 aa)). Ca(2+)-binding residues include Val-191, Glu-197, Asp-216, Gln-240, Asp-242, Asp-243, Glu-253, Asp-254, Asn-265, Asp-266, and Glu-278. A Phosphoserine modification is found at Ser-285.

Interacts with LASS2. Phosphorylated on a cytoplasmic Ser residue.

The protein resides in the membrane. Its function is as follows. Mediates the endocytosis of plasma glycoproteins to which the terminal sialic acid residue on their complex carbohydrate moieties has been removed. The receptor recognizes terminal galactose and N-acetylgalactosamine units. After ligand binding to the receptor, the resulting complex is internalized and transported to a sorting organelle, where receptor and ligand are disassociated. The receptor then returns to the cell membrane surface. The polypeptide is Asialoglycoprotein receptor 1 (ASGR1) (Pongo abelii (Sumatran orangutan)).